We begin with the raw amino-acid sequence, 578 residues long: Putative multidrug export ATP-binding/permease protein SAB1799c (578 aa).

Over 1-15 (MIKRYLQFVKPYKYR) the chain is Cytoplasmic. The chain crosses the membrane as a helical span at residues 16–36 (IFATIIVGIIKFGIPMLIPLL). Positions 16–306 (IFATIIVGII…LVASFTTLTQ (291 aa)) constitute an ABC transmembrane type-1 domain. Residues 37-59 (IKYAIDGVINNHALTTDEKVHHL) are Extracellular-facing. Residues 60–80 (TIAIGIALFIFVIVRPPIEFI) form a helical membrane-spanning segment. The Cytoplasmic portion of the chain corresponds to 81–138 (RQYLAQWTSNKILYDIRKKLYNHLQALSARFYANNQVGQVISRVINDVEQTKDFILTG). A helical membrane pass occupies residues 139 to 159 (LMNIWLDCITIIIALSIMFFL). At 160–162 (DVK) the chain is on the extracellular side. A helical transmembrane segment spans residues 163-183 (LTLAALFIFPFYILTVYVFFG). The Cytoplasmic segment spans residues 184-242 (RLRKLTRERSQALAEVQGFLHERVQGISVVKSFAIEDNEAKNFDKKNANFLTRALKHTR). A helical transmembrane segment spans residues 243-262 (WNAYSFATINTVTDIGPIIV). The Extracellular portion of the chain corresponds to 263–267 (IGVGA). A helical transmembrane segment spans residues 268 to 287 (YLAISGSITVGTLAAFVGYL). Over 288–578 (ELLFGPLRRL…YEHLYSIQNL (291 aa)) the chain is Cytoplasmic. In terms of domain architecture, ABC transporter spans 340-575 (IDIYHVNFQY…QGAYEHLYSI (236 aa)). Residue 374-381 (GMSGGGKS) coordinates ATP.

The protein belongs to the ABC transporter superfamily. In terms of assembly, homodimer.

It localises to the cell membrane. In terms of biological role, may be involved in multidrug export. Transmembrane domains (TMD) form a pore in the cell membrane and the ATP-binding domain (NBD) is responsible for energy generation. This chain is Putative multidrug export ATP-binding/permease protein SAB1799c, found in Staphylococcus aureus (strain bovine RF122 / ET3-1).